The following is a 131-amino-acid chain: Profilin (131 aa).

The protein belongs to the profilin family. In terms of assembly, occurs in many kinds of cells as a complex with monomeric actin in a 1:1 ratio.

Its subcellular location is the cytoplasm. It is found in the cytoskeleton. Its function is as follows. Binds to actin and affects the structure of the cytoskeleton. At high concentrations, profilin prevents the polymerization of actin, whereas it enhances it at low concentrations. By binding to PIP2, it inhibits the formation of IP3 and DG. The protein is Profilin of Cucumis melo (Muskmelon).